Consider the following 1633-residue polypeptide: Serine-aspartate repeat-containing protein F (1633 aa).

A signal peptide spans 1 to 45 (MKKRRQGPINKRVDFLSNKVNKYSIRKFTVGTASILVGATLMFGA). Positions 46–678 (ADNEAKAAED…GSSTAQGDNP (633 aa)) are ligand binding A region. Residues 51 to 269 (KAAEDNQLES…SISTDSSVND (219 aa)) form a disordered region. Positions 61–74 (ASKEEQKGSRDNES) are enriched in basic and acidic residues. Composition is skewed to polar residues over residues 85-99 (GSHSSEKTTNVNNAT) and 146-168 (PKTSTTQQDSTEKNNPSLKDNLN). The span at 175–184 (KESKTDEHST) shows a compositional bias: basic and acidic residues. Polar residues predominate over residues 186 to 226 (QAQMSTNKSNLDTNDSPTQSEKTSSQANNDSTDNQSAPSKQ). Residues 227–253 (LDSKPSEQKVYKTKFNDEPTQDVEHTT) show a composition bias toward basic and acidic residues. Residues 255–266 (KLKTPSISTDSS) show a composition bias toward polar residues. CNA-B domains follow at residues 679 to 797 (TYSL…YLTP), 798 to 907 (KYNV…FYKP), 908 to 1018 (IYNL…YKTP), and 1019 to 1129 (KYSV…FDDD). Residues 679-1129 (TYSLGDYVWL…SIDNGYFDDD (451 aa)) are type I collagen binding region. The segment at 862–889 (FETPEGYTPTKQNSGSDEGKDSNGTKTT) is disordered. A disordered region spans residues 1085–1608 (KPEGMTQTTA…ANEDHDSKGT (524 aa)). Over residues 1107-1119 (EDVRVTITDHDDF) the composition is skewed to basic and acidic residues. The segment covering 1125–1584 (YFDDDSDSDS…DSDSDSDSDS (460 aa)) has biased composition (acidic residues). A compositionally biased stretch (basic and acidic residues) spans 1585-1606 (DSDKNAKDKLPDTGANEDHDSK). The LPXTG sorting signal motif lies at 1594 to 1598 (LPDTG). Position 1597 is a pentaglycyl murein peptidoglycan amidated threonine (threonine 1597). A propeptide spans 1598–1633 (GANEDHDSKGTLLGTLFAGLGALLLGRRRKKDNKEK) (removed by sortase).

It belongs to the serine-aspartate repeat-containing protein (SDr) family.

The protein resides in the secreted. The protein localises to the cell wall. In terms of biological role, binds to type I collagen via alpha-2(I) or alpha-1(I) chains. The protein is Serine-aspartate repeat-containing protein F (sdrF) of Staphylococcus epidermidis (strain ATCC 12228 / FDA PCI 1200).